Consider the following 191-residue polypeptide: Calcium and integrin-binding protein 1 (191 aa).

The N-myristoyl glycine moiety is linked to residue Gly-2. 2 EF-hand domains span residues 103–138 (TPDI…LTGE) and 148–183 (EMKQ…SPDF). 10 residues coordinate Ca(2+): Asp-116, Asp-118, Asp-120, Thr-122, Asp-127, Asp-161, Asp-163, Asp-165, Thr-167, and Glu-172.

In terms of assembly, monomer. Interacts with the heterodimeric integrin alpha-IIb/beta3 (ITGA2B-ITGB3). Interacts with ITGA2B (via cytoplasmic domain); the interaction is direct and calcium-dependent. Interacts with the protein kinases PLK2/SNK and PRKDC (via the region immediately upstream of the kinase domain). Interacts with PLK3; the interaction inhibits PLK3 kinase activity. Interacts with PSEN2. Interacts (via C-terminus) with F8. Interacts with NBR1 (via C-terminus). Interacts with FEZ1 (via C-terminus). Interacts with UBR5 (via C-terminus); the interaction is sensitive to DNA damage, and may target CIB1 for ubiquitin-mediated degradation. Interacts with IFI6; the interaction is direct. Interacts with BCL2. Interacts with TAS1R2 (via C-terminus); the interaction is independent of the myristoylation state of CIB1. Interacts with ITPR3; the interaction occurs in a calcium dependent manner. Interacts with PTK2/FAK1. Interacts with MAP3K5; the interaction inhibits MAP3K5 activation by phosphorylation, and its subsequent interaction with TRAF2. Interacts (via C-terminal region) with STMN2 (via the N-terminal region); the interaction is direct, occurs in a calcium-dependent manner and attenuates the STMN2-induced neurite outgrowth inhibition. Interacts with SPHK1, the interaction occurs in a calcium-dependent manner. Interacts with ITGA2B (via C-terminal cytoplasmic tail); the interaction occurs upon platelet aggregation and is stabilized/increased in a calcium and magnesium-dependent manner. Interacts with PAK1 (via N-terminal region); the interaction is direct and occurs in a calcium-dependent manner. Interacts with RAC3 (via C-terminal region); the interaction induces their association with the cytoskeleton upon alpha-IIb/beta3 integrin-mediated adhesion. Interacts with ITGA5 and ITGAV. Interacts with MYO1C. Interacts with ITGA2B (via C-terminal cytoplasmic tail region). Interacts (via C-terminal region) with PPP3R1 isoform 1 and isoform 2; the interactions increase upon cardiomyocytes hypertrophy. Interacts with CACNA1C; the interaction increases upon cardiomyocytes hypertrophy. Interacts and forms a complex with TMC6 and TMC8; the interaction stabilizes each component of the complex. In terms of tissue distribution, expressed strongly in Sertoli cells, weakly in pachytene spermatocytes, round spermatids and condensing spermatids (at protein level). Expressed in testis. Expressed in cardiac myocytes and endothelial cells. Expressed in heart, liver, spleen, lung, kidney, brain and inner ear. In the inner ear, expressed in the vestibule, basilar membrane and spiral ganglion cells.

The protein resides in the membrane. It localises to the cell membrane. It is found in the sarcolemma. Its subcellular location is the apical cell membrane. The protein localises to the cell projection. The protein resides in the ruffle membrane. It localises to the filopodium tip. It is found in the growth cone. Its subcellular location is the lamellipodium. The protein localises to the cytoplasm. The protein resides in the cytoskeleton. It localises to the microtubule organizing center. It is found in the centrosome. Its subcellular location is the perinuclear region. The protein localises to the nucleus. The protein resides in the neuron projection. It localises to the perikaryon. Its function is as follows. Calcium-binding protein that plays a role in the regulation of numerous cellular processes, such as cell differentiation, cell division, cell proliferation, cell migration, thrombosis, angiogenesis, cardiac hypertrophy and apoptosis. Involved in bone marrow megakaryocyte differentiation by negatively regulating thrombopoietin-mediated signaling pathway. Participates in the endomitotic cell cycle of megakaryocyte, a form of mitosis in which both karyokinesis and cytokinesis are interrupted. Plays a role in integrin signaling by negatively regulating alpha-IIb/beta3 activation in thrombin-stimulated megakaryocytes preventing platelet aggregation. Up-regulates PTK2/FAK1 activity, and is also needed for the recruitment of PTK2/FAK1 to focal adhesions; it thus appears to play an important role in focal adhesion formation. Positively regulates cell migration on fibronectin in a CDC42-dependent manner, the effect being negatively regulated by PAK1. Functions as a negative regulator of stress activated MAP kinase (MAPK) signaling pathways. Down-regulates inositol 1,4,5-trisphosphate receptor-dependent calcium signaling. Involved in sphingosine kinase SPHK1 translocation to the plasma membrane in a N-myristoylation-dependent manner preventing TNF-alpha-induced apoptosis. Regulates serine/threonine-protein kinase PLK3 activity for proper completion of cell division progression. Plays a role in microtubule (MT) dynamics during neuronal development; disrupts the MT depolymerization activity of STMN2 attenuating NGF-induced neurite outgrowth and the MT reorganization at the edge of lamellipodia. Promotes cardiomyocyte hypertrophy via activation of the calcineurin/NFAT signaling pathway. Stimulates calcineurin PPP3R1 activity by mediating its anchoring to the sarcolemma. In ischemia-induced (pathological or adaptive) angiogenesis, stimulates endothelial cell proliferation, migration and microvessel formation by activating the PAK1 and ERK1/ERK2 signaling pathway. Also promotes cancer cell survival and proliferation. May regulate cell cycle and differentiation of spermatogenic germ cells, and/or differentiation of supporting Sertoli cells. Forms a complex with TMC6/EVER1 and TMC8/EVER2 in lymphocytes and keratynocytes where CIB1 stabilizes TMC6 and TMC8 levels and reciprocally. The chain is Calcium and integrin-binding protein 1 (Cib1) from Mus musculus (Mouse).